A 255-amino-acid chain; its full sequence is Large ribosomal subunit protein uL4 (255 aa).

The protein belongs to the universal ribosomal protein uL4 family. Part of the 50S ribosomal subunit.

Functionally, one of the primary rRNA binding proteins, this protein initially binds near the 5'-end of the 23S rRNA. It is important during the early stages of 50S assembly. It makes multiple contacts with different domains of the 23S rRNA in the assembled 50S subunit and ribosome. In terms of biological role, forms part of the polypeptide exit tunnel. The sequence is that of Large ribosomal subunit protein uL4 from Thermoplasma volcanium (strain ATCC 51530 / DSM 4299 / JCM 9571 / NBRC 15438 / GSS1).